The primary structure comprises 216 residues: Somatotropin (216 aa).

An N-terminal signal peptide occupies residues 1 to 26; the sequence is MAASPRNSVLLAFALLCLPWPQEVGA. His45 is a binding site for Zn(2+). A disulfide bridge links Cys78 with Cys189. The residue at position 131 (Ser131) is a Phosphoserine. Glu198 contacts Zn(2+). Cys206 and Cys214 are oxidised to a cystine.

This sequence belongs to the somatotropin/prolactin family.

The protein localises to the secreted. In terms of biological role, plays an important role in growth control. Its major role in stimulating body growth is to stimulate the liver and other tissues to secrete IGF1. It stimulates both the differentiation and proliferation of myoblasts. It also stimulates amino acid uptake and protein synthesis in muscle and other tissues. The polypeptide is Somatotropin (GH1) (Canis lupus familiaris (Dog)).